The sequence spans 315 residues: DNA-directed RNA polymerase subunit alpha (315 aa).

The alpha N-terminal domain (alpha-NTD) stretch occupies residues methionine 1 to threonine 228. Residues lysine 245–glutamate 315 are alpha C-terminal domain (alpha-CTD).

The protein belongs to the RNA polymerase alpha chain family. As to quaternary structure, homodimer. The RNAP catalytic core consists of 2 alpha, 1 beta, 1 beta' and 1 omega subunit. When a sigma factor is associated with the core the holoenzyme is formed, which can initiate transcription.

It carries out the reaction RNA(n) + a ribonucleoside 5'-triphosphate = RNA(n+1) + diphosphate. Functionally, DNA-dependent RNA polymerase catalyzes the transcription of DNA into RNA using the four ribonucleoside triphosphates as substrates. The sequence is that of DNA-directed RNA polymerase subunit alpha from Clostridium beijerinckii (strain ATCC 51743 / NCIMB 8052) (Clostridium acetobutylicum).